The following is a 102-amino-acid chain: Biotrophy-associated secreted protein 2 (102 aa).

An N-terminal signal peptide occupies residues 1–19; the sequence is MVRVSTFAAILAMALSVTA. N-linked (GlcNAc...) asparagine glycosylation is present at asparagine 46.

It is found in the secreted. Secreted effector involved in biotrophic colonization of plant cells. The protein is Biotrophy-associated secreted protein 2 of Pyricularia oryzae (strain 70-15 / ATCC MYA-4617 / FGSC 8958) (Rice blast fungus).